A 463-amino-acid polypeptide reads, in one-letter code: MSTNQIILTDQGNNYVNVWSHVAQDLYNHYGETLYNSWFSKVNFIESSLNTVILCAPTNFVRDWIKSKYSMVILQLFQHYNNTIKSIEIITKELPGTTQTVTELPTKTFADIGSSELNSENIFSTLDVRFTFDNFVVGAPNELAYAAARAVAESSGAVSESNPLFLYGGVGLGKTHLMHAIGWYIKQHNPSRKVIYMSAEKFMYQFVKALRNKEVISFKEKFRSVDVLMIDDIQFICGKDSTQEEFFHTFNTLIDNNRQMVISCDRSPSDLDNIEDRIKSRLGWGLVADVHSTTYELRLGILESKIEQMNVKIPKDVIDFLASKIVSNVRELEGALNKVIAHSNFTLKEITLENTQNILRDLLRSNERIITVEDIQKKVASRYNIKLSDMSSSRRLREVARPRQIAMYLSKALTPKSLADIGKKFGKKDHTTVMHAIKKVEELLENDIELREEIHLLMKILQN.

The domain I, interacts with DnaA modulators stretch occupies residues 1–83 (MSTNQIILTD…LQLFQHYNNT (83 aa)). The domain II stretch occupies residues 83-124 (TIKSIEIITKELPGTTQTVTELPTKTFADIGSSELNSENIFS). The domain III, AAA+ region stretch occupies residues 125–343 (TLDVRFTFDN…GALNKVIAHS (219 aa)). ATP is bound by residues Gly171, Gly173, Lys174, and Thr175. Positions 344-463 (NFTLKEITLE…IHLLMKILQN (120 aa)) are domain IV, binds dsDNA.

Belongs to the DnaA family. As to quaternary structure, oligomerizes as a right-handed, spiral filament on DNA at oriC.

It localises to the cytoplasm. Plays an essential role in the initiation and regulation of chromosomal replication. ATP-DnaA binds to the origin of replication (oriC) to initiate formation of the DNA replication initiation complex once per cell cycle. Binds the DnaA box (a 9 base pair repeat at the origin) and separates the double-stranded (ds)DNA. Forms a right-handed helical filament on oriC DNA; dsDNA binds to the exterior of the filament while single-stranded (ss)DNA is stabiized in the filament's interior. The ATP-DnaA-oriC complex binds and stabilizes one strand of the AT-rich DNA unwinding element (DUE), permitting loading of DNA polymerase. After initiation quickly degrades to an ADP-DnaA complex that is not apt for DNA replication. Binds acidic phospholipids. This Rickettsia africae (strain ESF-5) protein is Chromosomal replication initiator protein DnaA.